Consider the following 151-residue polypeptide: Large ribosomal subunit protein bL9 (151 aa).

Belongs to the bacterial ribosomal protein bL9 family.

Functionally, binds to the 23S rRNA. This Prochlorococcus marinus (strain MIT 9515) protein is Large ribosomal subunit protein bL9.